The chain runs to 523 residues: Nuclear receptor ROR-alpha (523 aa).

The span at 1–26 (MESAPAAPDPAASEPGSSGADAAAGS) shows a compositional bias: low complexity. A disordered region spans residues 1 to 63 (MESAPAAPDP…SRGISVTKKT (63 aa)). N6-methyllysine is present on K38. Residues 48–57 (QSYSSTSRGI) show a composition bias toward polar residues. NR C4-type zinc fingers lie at residues 73-93 (CKIC…CEGC) and 109-133 (CPRQ…LQKC). The segment at residues 73 to 138 (CKICGDKSSG…RLQKCLAVGM (66 aa)) is a DNA-binding region (nuclear receptor). The segment at 154–183 (DSLYAEVQKHRMQQQQRDHQQQPGEAEPLT) is disordered. T183 carries the phosphothreonine; by MAPK1 modification. K240 participates in a covalent cross-link: Glycyl lysine isopeptide (Lys-Gly) (interchain with G-Cter in SUMO). Residues 272–510 (ELEHLAQNIS…LHFPPLYKEL (239 aa)) form the NR LBD domain. Positions 506 to 523 (LYKELFTSEFEPAMQIDG) match the AF-2 motif.

Belongs to the nuclear hormone receptor family. NR1 subfamily. As to quaternary structure, monomer. Interacts (via the DNA-binding domain) with HIF1A; the interaction enhances HIF1A transcription under hypoxia through increasing protein stability. Interacts with CEBPB; the interaction disrupts the interaction CEBPB:EP300. Interacts with the coactivators NCOA2, PPARGC1A (via LXXLL motif), EP300 and MED1. Interacts with the corepressor NCOR1. Interacts with MAGED1 and CTNNB1. Interacts with CRY1 and PER2. Interacts (via AF-2 motif) with PROX1. Interacts with NRIP1. Isoform 4 interacts (via AF-2 motif) with isoform 1 of FOXP3 (via LXXLL motif). Phosphorylation by conventional PKCs in neurons inhibits transcriptional activity. Phosphorylated on Thr-183 by MAPK1/ERK1 in vitro. Post-translationally, sumoylated by SENP1 and SENP2. Sumoylation, promoted by PIAS2, PIAS3, PIAS4 but not PIAS1, enhances the transcriptional activity. Desumoylated by SENP1. In terms of processing, ubiquitinated, leading to its degradation by the proteasome. Proteasomal degradation is required for efficient transcriptional activity and is prevented by HR. Monomethylated at Lys-38 by EZH2, this creates a degron recognized by a DCX (DDB1-DCAF1/VPRBP-CUL4A-RBX1) E3 ubiquitin ligase complex. In terms of tissue distribution, widely expressed in a number of tissues. Expressed in both regulatory T-cells (Treg) and effector T-cells (Teff). Isoform 4: Highly expressed in the central nervous system, including in the cerebellum.

Its subcellular location is the nucleus. Functionally, nuclear receptor that binds DNA as a monomer to ROR response elements (RORE) containing a single core motif half-site 5'-AGGTCA-3' preceded by a short A-T-rich sequence. Key regulator of embryonic development, cellular differentiation, immunity, circadian rhythm as well as lipid, steroid, xenobiotics and glucose metabolism. Considered to have intrinsic transcriptional activity, have some natural ligands like oxysterols that act as agonists (25-hydroxycholesterol) or inverse agonists (7-oxygenated sterols), enhancing or repressing the transcriptional activity, respectively. Recruits distinct combinations of cofactors to target genes regulatory regions to modulate their transcriptional expression, depending on the tissue, time and promoter contexts. Regulates genes involved in photoreceptor development including OPN1SW, OPN1SM and ARR3 and skeletal muscle development with MYOD1. Required for proper cerebellum development. Regulates SHH gene expression, among others, to induce granule cells proliferation as well as expression of genes involved in calcium-mediated signal transduction. Regulates the circadian expression of several clock genes, including CLOCK, BMAL1, NPAS2 and CRY1. Competes with NR1D1 for binding to their shared DNA response element on some clock genes such as BMAL1, CRY1 and NR1D1 itself, resulting in NR1D1-mediated repression or RORA-mediated activation of clock genes expression, leading to the circadian pattern of clock genes expression. Therefore influences the period length and stability of the clock. Regulates genes involved in lipid metabolism such as apolipoproteins APOA1, APOA5, APOC3 and PPARG. In liver, has specific and redundant functions with RORC as positive or negative modulator of expression of genes encoding phase I and phase II proteins involved in the metabolism of lipids, steroids and xenobiotics, such as CYP7B1 and SULT2A1. Induces a rhythmic expression of some of these genes. In addition, interplays functionally with NR1H2 and NR1H3 for the regulation of genes involved in cholesterol metabolism. Also involved in the regulation of hepatic glucose metabolism through the modulation of G6PC1 and PCK1. In adipose tissue, plays a role as negative regulator of adipocyte differentiation, probably acting through dual mechanisms. May suppress CEBPB-dependent adipogenesis through direct interaction and PPARG-dependent adipogenesis through competition for DNA-binding. Downstream of IL6 and TGFB and synergistically with RORC isoform 2, is implicated in the lineage specification of uncommitted CD4(+) T-helper (T(H)) cells into T(H)17 cells, antagonizing the T(H)1 program. Probably regulates IL17 and IL17F expression on T(H) by binding to the essential enhancer conserved non-coding sequence 2 (CNS2) in the IL17-IL17F locus. Involved in hypoxia signaling by interacting with and activating the transcriptional activity of HIF1A. May inhibit cell growth in response to cellular stress. May exert an anti-inflammatory role by inducing CHUK expression and inhibiting NF-kappa-B signaling. The protein is Nuclear receptor ROR-alpha (RORA) of Homo sapiens (Human).